A 230-amino-acid chain; its full sequence is Uracil-DNA glycosylase (230 aa).

Asp70 acts as the Proton acceptor in catalysis.

Belongs to the uracil-DNA glycosylase (UDG) superfamily. UNG family.

The protein resides in the cytoplasm. It catalyses the reaction Hydrolyzes single-stranded DNA or mismatched double-stranded DNA and polynucleotides, releasing free uracil.. In terms of biological role, excises uracil residues from the DNA which can arise as a result of misincorporation of dUMP residues by DNA polymerase or due to deamination of cytosine. The sequence is that of Uracil-DNA glycosylase from Pseudomonas syringae pv. tomato (strain ATCC BAA-871 / DC3000).